Reading from the N-terminus, the 181-residue chain is Peptidyl-prolyl cis-trans isomerase H (181 aa).

The PPIase cyclophilin-type domain maps to F17–E180.

This sequence belongs to the cyclophilin-type PPIase family. PPIase H subfamily.

Its subcellular location is the nucleus. The enzyme catalyses [protein]-peptidylproline (omega=180) = [protein]-peptidylproline (omega=0). PPIases accelerate the folding of proteins. It catalyzes the cis-trans isomerization of proline imidic peptide bonds in oligopeptides. This is Peptidyl-prolyl cis-trans isomerase H (cyp3) from Aspergillus fumigatus (strain ATCC MYA-4609 / CBS 101355 / FGSC A1100 / Af293) (Neosartorya fumigata).